The following is an 89-amino-acid chain: UPF0213 protein LSEI_1587 (89 aa).

The 76-residue stretch at 4 to 79 (KTYYFYVLLC…KHQTRHRKEV (76 aa)) folds into the GIY-YIG domain.

It belongs to the UPF0213 family.

The sequence is that of UPF0213 protein LSEI_1587 from Lacticaseibacillus paracasei (strain ATCC 334 / BCRC 17002 / CCUG 31169 / CIP 107868 / KCTC 3260 / NRRL B-441) (Lactobacillus paracasei).